The sequence spans 522 residues: F-box-like/WD repeat-containing protein TBL1XR1-B (522 aa).

The LisH domain maps to 4–36 (SSDEVNFLVYRYLQESGFSHSAFTFGIESHISQ). The region spanning 41-86 (GALVPPAALISIIQKGLQYVEAEVSINEDGTLFDGRPIESLSLIDA) is the F-box-like domain. A disordered region spans residues 122–150 (ATSANNQQPPAKNGESTANGEENGGHALA). Residues 123 to 141 (TSANNQQPPAKNGESTANG) are compositionally biased toward polar residues. WD repeat units lie at residues 175–214 (GHESEVFICAWNPVSDLLASGSGDSTARIWNLSENSTSGS), 231–270 (PSNKDVTSLDWNSEGTLLATGSYDGFARIWTKDGNLASTL), 272–311 (QHKGPIFALKWNKKGNFILSAGVDKTTIIWDAHTGEAKQQ), 314–352 (FHSAPALDVDWQSNNTFASCSTDMCIHVCKLGQDRPIKT), 355–394 (GHTNEVNAIKWDPTGNLLASCSDDMTLKIWSMKHDTCVHD), 397–445 (AHNK…CIHT), 448–487 (KHQEPVYSVAFSPDGRYLASGSFDKCVHIWNTQTGALVHS), and 489–522 (RGTGGIFEVCWNAAGDKVGASASDGSVCVLDLRK).

It belongs to the WD repeat EBI family. As to quaternary structure, interacts with heterodimers of rxra and thrb, and this interaction is abrogated by thyroid hormone binding to thrb. Interacts with ncor1.

Its subcellular location is the nucleus. Functionally, F-box-like protein which acts as an integral component of the N-CoR transcriptional corepressor complex. Probably regulates transcription activation mediated by nuclear receptors. May mediate the recruitment of the 19S proteasome complex, leading to the subsequent proteasomal degradation of the N-CoR complex, thereby allowing cofactor exchange and transcription activation. This is F-box-like/WD repeat-containing protein TBL1XR1-B (tbl1xr1-b) from Xenopus laevis (African clawed frog).